An 88-amino-acid polypeptide reads, in one-letter code: Small ribosomal subunit protein bS18 (88 aa).

The protein belongs to the bacterial ribosomal protein bS18 family. Part of the 30S ribosomal subunit. Forms a tight heterodimer with protein bS6.

Functionally, binds as a heterodimer with protein bS6 to the central domain of the 16S rRNA, where it helps stabilize the platform of the 30S subunit. The sequence is that of Small ribosomal subunit protein bS18 from Aliarcobacter butzleri (strain RM4018) (Arcobacter butzleri).